The chain runs to 270 residues: tRNA pseudouridine synthase A (270 aa).

Residue aspartate 60 is the Nucleophile of the active site. The segment at 107–111 (FHARF) is RNA binding. Residue tyrosine 118 coordinates substrate. The interaction with tRNA stretch occupies residues 168–172 (QCQSR).

This sequence belongs to the tRNA pseudouridine synthase TruA family. In terms of assembly, homodimer.

The catalysed reaction is uridine(38/39/40) in tRNA = pseudouridine(38/39/40) in tRNA. Its function is as follows. Formation of pseudouridine at positions 38, 39 and 40 in the anticodon stem and loop of transfer RNAs. The protein is tRNA pseudouridine synthase A of Citrobacter koseri (strain ATCC BAA-895 / CDC 4225-83 / SGSC4696).